Consider the following 370-residue polypeptide: UDP-N-acetylglucosamine--N-acetylmuramyl-(pentapeptide) pyrophosphoryl-undecaprenol N-acetylglucosamine transferase (370 aa).

Residues 20–22 (TAG), Asn134, Arg170, Ser204, Ile257, and Gln301 each bind UDP-N-acetyl-alpha-D-glucosamine.

This sequence belongs to the glycosyltransferase 28 family. MurG subfamily.

Its subcellular location is the cell membrane. It carries out the reaction di-trans,octa-cis-undecaprenyl diphospho-N-acetyl-alpha-D-muramoyl-L-alanyl-D-glutamyl-meso-2,6-diaminopimeloyl-D-alanyl-D-alanine + UDP-N-acetyl-alpha-D-glucosamine = di-trans,octa-cis-undecaprenyl diphospho-[N-acetyl-alpha-D-glucosaminyl-(1-&gt;4)]-N-acetyl-alpha-D-muramoyl-L-alanyl-D-glutamyl-meso-2,6-diaminopimeloyl-D-alanyl-D-alanine + UDP + H(+). It participates in cell wall biogenesis; peptidoglycan biosynthesis. Its function is as follows. Cell wall formation. Catalyzes the transfer of a GlcNAc subunit on undecaprenyl-pyrophosphoryl-MurNAc-pentapeptide (lipid intermediate I) to form undecaprenyl-pyrophosphoryl-MurNAc-(pentapeptide)GlcNAc (lipid intermediate II). In Corynebacterium jeikeium (strain K411), this protein is UDP-N-acetylglucosamine--N-acetylmuramyl-(pentapeptide) pyrophosphoryl-undecaprenol N-acetylglucosamine transferase.